Reading from the N-terminus, the 185-residue chain is Ribosome-recycling factor (185 aa).

The protein belongs to the RRF family.

It is found in the cytoplasm. Responsible for the release of ribosomes from messenger RNA at the termination of protein biosynthesis. May increase the efficiency of translation by recycling ribosomes from one round of translation to another. The chain is Ribosome-recycling factor from Ehrlichia chaffeensis (strain ATCC CRL-10679 / Arkansas).